The chain runs to 147 residues: Siroheme decarboxylase NirG subunit (147 aa).

The protein belongs to the Ahb/Nir family. In terms of assembly, probably forms a complex composed of NirD, NirL, NirG and NirH. All proteins are required for the total conversion of siroheme to didecarboxysiroheme.

The enzyme catalyses siroheme + 2 H(+) = 12,18-didecarboxysiroheme + 2 CO2. It functions in the pathway porphyrin-containing compound metabolism. Involved in heme d1 biosynthesis. Catalyzes the decarboxylation of siroheme into didecarboxysiroheme. The sequence is that of Siroheme decarboxylase NirG subunit from Stutzerimonas stutzeri (Pseudomonas stutzeri).